Reading from the N-terminus, the 92-residue chain is Large ribosomal subunit protein eL37 (92 aa).

Zn(2+) is bound by residues cysteine 19, cysteine 22, cysteine 34, and cysteine 37. The segment at 19 to 37 (CRRCGRSSYHIQKSKCAQC) adopts a C4-type zinc-finger fold.

Belongs to the eukaryotic ribosomal protein eL37 family. Zn(2+) is required as a cofactor.

Its function is as follows. Binds to the 23S rRNA. This chain is Large ribosomal subunit protein eL37 (RpL37), found in Spodoptera frugiperda (Fall armyworm).